The primary structure comprises 275 residues: Phosphite import ATP-binding protein PxtA (275 aa).

One can recognise an ABC transporter domain in the interval 11 to 252 (LRVDRLSVVY…QLERIYAGRS (242 aa)). 44-51 (GLSGAGKS) contributes to the ATP binding site. The segment at 251–275 (RSTTQPANAPAEPPVMLEPSLEMSR) is disordered.

Belongs to the ABC transporter superfamily. Phosphonates importer (TC 3.A.1.9.1) family. The complex is composed of two ATP-binding proteins (PtxA), two transmembrane proteins (PtxC) and a solute-binding protein (PtxB).

Its subcellular location is the cell inner membrane. It catalyses the reaction phosphite(out) + ATP + H2O = phosphite(in) + ADP + phosphate + H(+). Part of the ABC transporter complex PtxABC involved in phosphite import. Responsible for energy coupling to the transport system. This Stutzerimonas stutzeri (Pseudomonas stutzeri) protein is Phosphite import ATP-binding protein PxtA (ptxA).